Here is a 223-residue protein sequence, read N- to C-terminus: Protein UGX2 (223 aa).

A compositionally biased stretch (basic residues) spans 78–95 (SNKRAKMKSKTKLTRTAK). A disordered region spans residues 78 to 117 (SNKRAKMKSKTKLTRTAKQRRESPVCERDESDEDNDSDHY). A compositionally biased stretch (basic and acidic residues) spans 96–105 (QRRESPVCER).

In Saccharomyces cerevisiae (strain ATCC 204508 / S288c) (Baker's yeast), this protein is Protein UGX2 (UGX2).